Consider the following 710-residue polypeptide: uncharacterized protein (710 aa).

Coiled-coil stretches lie at residues 273–298 (LYRQERKELKNTKQRYLKKKNEMEEG) and 477–528 (RYEK…VADT).

This is an uncharacterized protein from Coxiella burnetii (strain RSA 493 / Nine Mile phase I).